A 34-amino-acid polypeptide reads, in one-letter code: uncharacterized protein (34 aa).

The helical transmembrane segment at 10–30 threads the bilayer; the sequence is LIITSSFFAIAAVLVLSVLLI.

It is found in the membrane. This is an uncharacterized protein from Escherichia coli O6:H1 (strain CFT073 / ATCC 700928 / UPEC).